A 220-amino-acid chain; its full sequence is MKYPPSLVSLIRELSRLPGIGPKSAQRLAFHLFEQPREDIERLASALLEAKRDLHVCPICFNITDAEKCDVCADPSRDQRTICVVEEPGDVIALERSGEYRGLYHVLHGVLSPMNGVGPDKLHIKPLLPRVGQGMEVILATGTTVEGDATALYLQRLLEPLGAAISRIAYGVPVGGSLEYTDEVTLGRALTGRQTVSKPQPPQRPGDEDGADGAAVPASR.

Residues 57–72 form a C4-type zinc finger; sequence CPICFNITDAEKCDVC. Residues 80 to 173 enclose the Toprim domain; the sequence is RTICVVEEPG…AISRIAYGVP (94 aa). The tract at residues 190 to 220 is disordered; it reads LTGRQTVSKPQPPQRPGDEDGADGAAVPASR.

Belongs to the RecR family.

Its function is as follows. May play a role in DNA repair. It seems to be involved in an RecBC-independent recombinational process of DNA repair. It may act with RecF and RecO. This chain is Recombination protein RecR, found in Deinococcus radiodurans (strain ATCC 13939 / DSM 20539 / JCM 16871 / CCUG 27074 / LMG 4051 / NBRC 15346 / NCIMB 9279 / VKM B-1422 / R1).